The primary structure comprises 2176 residues: Protein sidekick-2 (2176 aa).

A signal peptide spans 1–24 (MFSSMWRLPLWTLLALHRIHSAGA). Over 25–1936 (QDDVPPYFKT…ASPFYEEWWF (1912 aa)) the chain is Extracellular. 6 Ig-like C2-type domains span residues 30–112 (PYFK…TEVQ), 117–204 (GSFE…QPIT), 219–298 (PTII…SSVA), 312–402 (PQFV…LAVT), 406–495 (PNIT…ADLV), and 500–589 (TRIT…AHLR). Residues Cys52 and Cys95 are joined by a disulfide bond. An N-linked (GlcNAc...) asparagine glycan is attached at Asn197. 4 disulfide bridges follow: Cys241-Cys288, Cys334-Cys384, Cys427-Cys479, and Cys521-Cys573. 13 Fibronectin type-III domains span residues 596–692 (APEH…LPEE), 697–793 (PPQN…TLQG), 798–897 (PPGN…THED), 901–995 (PVGH…VPPE), 999–1098 (APTN…TLQA), 1103–1201 (APAN…TRES), 1206–1303 (GPTN…TLDD), 1307–1401 (PPMG…TEKR), 1406–1503 (PPSK…TLQA), 1508–1625 (APTI…VGEA), 1630–1726 (APQN…TQQA), 1730–1825 (APGS…TGPG), and 1828–1930 (APGP…ASPF). A glycan (N-linked (GlcNAc...) asparagine) is linked at Asn747. 2 N-linked (GlcNAc...) asparagine glycosylation sites follow: Asn940 and Asn952. N-linked (GlcNAc...) asparagine glycosylation occurs at Asn1106. N-linked (GlcNAc...) asparagine glycosylation occurs at Asn1592. Positions 1712-1734 (DGPRSTPTRGQTQQAAPSAPGSV) are disordered. The span at 1716–1727 (STPTRGQTQQAA) shows a compositional bias: polar residues. A helical transmembrane segment spans residues 1937–1957 (LVVIALVGLIFILLLVFVLII). The Cytoplasmic segment spans residues 1958 to 2176 (RGQSKKYSKK…APIAGFSSFV (219 aa)). Disordered stretches follow at residues 2013-2032 (GLYT…YSDE), 2043-2070 (AESS…VDTN), and 2102-2176 (QAYS…SSFV). Polar residues-rich tracts occupy residues 2044–2070 (ESSS…VDTN) and 2119–2129 (VPNSNSTQQGS). The short motif at 2170 to 2176 (AGFSSFV) is the PDZ-binding element.

Belongs to the sidekick family. In terms of assembly, homodimer; mediates homophilic interactions to promote cell adhesion. Interacts (via PDZ-binding motif) with MAGI1, MAGI2, DLG2, DLG3 and DLG4. As to expression, expressed in retinal ganglion cells (RGCs) that form synapses in distinct inner plexiform layer (IPL) sublaminae. Specifically expressed in specific subsets of retinal ganglion cells (RGCs), named W3B-RGCs, that specifically respond when the timing of the movement of a small object differs from that of the background, but not when they coincide (at protein level). Also present in excitatory amacrine cell type called VG3-ACs, that provide strong and selective input W3B-RGCs (at protein level). Expressed at low levels in the glomeruli.

It localises to the cell membrane. It is found in the synapse. Adhesion molecule that promotes lamina-specific synaptic connections in the retina and is specifically required for the formation of neuronal circuits that detect motion. Acts by promoting formation of synapses between two specific retinal cell types: the retinal ganglion cells W3B-RGCs and the excitatory amacrine cells VG3-ACs. Formation of synapses between these two cells plays a key role in detection of motion. Promotes synaptic connectivity via homophilic interactions. This Mus musculus (Mouse) protein is Protein sidekick-2.